The sequence spans 272 residues: Eukaryotic translation initiation factor 4E homolog (272 aa).

The tract at residues 249–272 (GKLNSGRKPSNTRGGFSSFGNKRY) is disordered. Over residues 255-272 (RKPSNTRGGFSSFGNKRY) the composition is skewed to polar residues.

Belongs to the eukaryotic initiation factor 4E family.

Recognizes and binds the 7-methylguanosine-containing mRNA cap during an early step in the initiation of protein synthesis and facilitates ribosome binding by inducing the unwinding of the mRNAs secondary structures. In Acanthamoeba polyphaga mimivirus (APMV), this protein is Eukaryotic translation initiation factor 4E homolog.